Reading from the N-terminus, the 87-residue chain is Putative defensin-like protein 235 (87 aa).

The N-terminal stretch at 1 to 26 is a signal peptide; the sequence is MRSATFFLVSCVLMSFVLSHVKEVEA. 3 disulfides stabilise this stretch: Cys46–Cys73, Cys54–Cys82, and Cys71–Cys84.

This sequence belongs to the DEFL family.

It is found in the secreted. This chain is Putative defensin-like protein 235 (SCRL26), found in Arabidopsis thaliana (Mouse-ear cress).